We begin with the raw amino-acid sequence, 110 residues long: Protein RALF-like 4 (110 aa).

The first 23 residues, 1–23, serve as a signal peptide directing secretion; the sequence is MGVKMLLIFGLLILAMVAKSVNA. Positions 24–58 are cleaved as a propeptide — removed in mature form; the sequence is TYPLTKSCINGQGCIGEDDELESLMDSETNRRQLA. Intrachain disulfides connect Cys76-Cys86 and Cys99-Cys105.

This sequence belongs to the plant rapid alkalinization factor (RALF) family. Proteolytically cleaved, probably by S1P, a subtilisin-like serine protease (subtilase).

The protein localises to the secreted. In terms of biological role, cell signaling peptide that may regulate plant stress, growth, and development. Mediates a rapid alkalinization of extracellular space by mediating a transient increase in the cytoplasmic Ca(2+) concentration leading to a calcium-dependent signaling events through a cell surface receptor and a concomitant activation of some intracellular mitogen-activated protein kinases. This Arabidopsis thaliana (Mouse-ear cress) protein is Protein RALF-like 4 (RALFL4).